Here is a 163-residue protein sequence, read N- to C-terminus: UPF0262 protein RPD_4278 (163 aa).

It belongs to the UPF0262 family.

The sequence is that of UPF0262 protein RPD_4278 from Rhodopseudomonas palustris (strain BisB5).